Here is a 539-residue protein sequence, read N- to C-terminus: MNQLHRRMGTFSLMMVGLGSMIGSGWLFGAWRAAQIAGPAAIISWVIGMVVILFIALSYSELGSMFPEAGGMVKYTQYSHGSFIGFIAGWANWIAIVSVIPVEAVASVQYMSSWPWEWAKWTSGLVKNGTLTGEGLAFASVLLLIYFLLNYWTVNLFSKANSLITIFKIIIPGLTIGALLFVGFHGENFTGGQSIAPNGWASVLTAVATSGIVFAFNGFQSPINMAGEAKNPGKSIPIAVVGSLFVATVIYVLLQIAFIGAVNPSDIAHGWSHLNFNSPFADLAIALNINWLVIVLYADAFVSPSGTGITYTATTSRMIYGMEKNKYMPSIFGKLHPIYGVPRQAMFFNLIVSFIFLFLFRGWGVLAEIISVATLISYITGPITVMTLRRTGKDLYRPLRLKGLNVIAPLGFIFASLVLYWARWPLTGQVLFIILIGLPIYFYYQAKAKWKGFGRNFKAGVWMVFYLLAMMVISYLGSDKFGGLNVIHYGWDMVLIAMVSLVFYVWALKSGYQTEYLKDAKEINSQLLNGQSEAAAGKE.

13 consecutive transmembrane segments (helical) span residues 11–31 (FSLM…FGAW), 36–56 (IAGP…LFIA), 82–102 (SFIG…VIPV), 137–157 (AFAS…VNLF), 164–184 (ITIF…FVGF), 199–219 (GWAS…FNGF), 238–258 (IAVV…QIAF), 283–303 (LAIA…AFVS), 350–370 (LIVS…AEII), 401–421 (LKGL…VLYW), 424–444 (WPLT…YFYY), 457–477 (FKAG…SYLG), and 486–506 (VIHY…FYVW).

This sequence belongs to the amino acid-polyamine-organocation (APC) superfamily. AGT (TC 2.A.3.11) family.

The protein resides in the cell membrane. Major glutamate and serine transporter. Cannot transport threonine. AimA is the major glutamate transporter under standard growth conditions when glutamate is not limiting in the medium. This is Glutamate/serine transporter AimA from Bacillus subtilis (strain 168).